The chain runs to 60 residues: UPF0434 protein PC1_1771 (60 aa).

The protein belongs to the UPF0434 family.

This chain is UPF0434 protein PC1_1771, found in Pectobacterium carotovorum subsp. carotovorum (strain PC1).